The following is a 124-amino-acid chain: Large ribosomal subunit protein bL12 (124 aa).

A disordered region spans residues 93–124 (GAPSTVKEGASKDEAEEAKKKLEEAGASVELK). Over residues 101–116 (GASKDEAEEAKKKLEE) the composition is skewed to basic and acidic residues.

The protein belongs to the bacterial ribosomal protein bL12 family. As to quaternary structure, homodimer. Part of the ribosomal stalk of the 50S ribosomal subunit. Forms a multimeric L10(L12)X complex, where L10 forms an elongated spine to which 2 to 4 L12 dimers bind in a sequential fashion. Binds GTP-bound translation factors.

In terms of biological role, forms part of the ribosomal stalk which helps the ribosome interact with GTP-bound translation factors. Is thus essential for accurate translation. This Marinobacter nauticus (strain ATCC 700491 / DSM 11845 / VT8) (Marinobacter aquaeolei) protein is Large ribosomal subunit protein bL12.